The following is a 106-amino-acid chain: uncharacterized protein (106 aa).

This sequence belongs to the HesB/IscA family.

This is an uncharacterized protein from Rhodobacter capsulatus (Rhodopseudomonas capsulata).